The chain runs to 156 residues: MTQSQVTPNAREALTETIVDAKVRKNLTFEAINEGTGLSLAYTTAALLGQHALPENAAKLVAERLGLDDGAVRLLQTIPVRGSTPGGVPTDPTVYRFYEMVQVYGSTLKALVHEKFGDGIISAINFKLDIQKVPDPEGGERAVITLNGKYLPTKPF.

Active-site residues include Arg96, Glu99, and Ser122.

It belongs to the cyanase family.

It catalyses the reaction cyanate + hydrogencarbonate + 3 H(+) = NH4(+) + 2 CO2. In terms of biological role, catalyzes the reaction of cyanate with bicarbonate to produce ammonia and carbon dioxide. This chain is Cyanate hydratase, found in Burkholderia vietnamiensis (strain G4 / LMG 22486) (Burkholderia cepacia (strain R1808)).